A 64-amino-acid chain; its full sequence is Large ribosomal subunit protein bL35 (64 aa).

The protein belongs to the bacterial ribosomal protein bL35 family.

This Pseudomonas savastanoi pv. phaseolicola (strain 1448A / Race 6) (Pseudomonas syringae pv. phaseolicola (strain 1448A / Race 6)) protein is Large ribosomal subunit protein bL35.